The primary structure comprises 590 residues: 4-oxocyclohex-2-ene-1-carboxylate 5-dehydrogenase (590 aa).

The protein belongs to the FAD-dependent oxidoreductase 2 family. In terms of assembly, forms multimers. The cofactor is FAD.

The catalysed reaction is 4-oxocyclohex-2-ene-1-carboxylate + NAD(+) = 4-oxocyclohexa-2,5-diene-1-carboxylate + NADH + H(+). Its function is as follows. Desaturase involved in a cyclohexanecarboxylate (CHCA) degradation pathway. Probably catalyzes the conversion of 4-oxocyclohexenecarboxylate to 4-oxocyclohex-2,5-dienecarboxylate, which is spontaneously isomerized to 4-hydroxybenzoate (4-HBA). The sequence is that of 4-oxocyclohex-2-ene-1-carboxylate 5-dehydrogenase from Sinomonas cyclohexanicum (Corynebacterium cyclohexanicum).